A 76-amino-acid polypeptide reads, in one-letter code: DNA-directed RNA polymerase subunit epsilon (76 aa).

This sequence belongs to the RNA polymerase subunit epsilon family. As to quaternary structure, RNAP is composed of a core of 2 alpha, a beta and a beta' subunit. The core is associated with a delta subunit, and at least one of epsilon or omega. When a sigma factor is associated with the core the holoenzyme is formed, which can initiate transcription.

The enzyme catalyses RNA(n) + a ribonucleoside 5'-triphosphate = RNA(n+1) + diphosphate. Its function is as follows. A non-essential component of RNA polymerase (RNAP). In Streptococcus equi subsp. zooepidemicus (strain H70), this protein is DNA-directed RNA polymerase subunit epsilon.